A 492-amino-acid chain; its full sequence is Probable cobyric acid synthase (492 aa).

The region spanning 252 to 444 (PIEVNIVKFS…FHGILENFEF (193 aa)) is the GATase cobBQ-type domain. The Nucleophile role is filled by Cys-330. The active site involves His-436.

Belongs to the CobB/CobQ family. CobQ subfamily.

It participates in cofactor biosynthesis; adenosylcobalamin biosynthesis. In terms of biological role, catalyzes amidations at positions B, D, E, and G on adenosylcobyrinic A,C-diamide. NH(2) groups are provided by glutamine, and one molecule of ATP is hydrogenolyzed for each amidation. This is Probable cobyric acid synthase from Methanococcus maripaludis (strain C5 / ATCC BAA-1333).